Consider the following 884-residue polypeptide: Probable leucine--tRNA ligase, cytoplasmic (884 aa).

The 'HIGH' region motif lies at 40 to 50 (PYMNGKLHLGH). Residues 566-570 (KMSKS) carry the 'KMSKS' region motif. Residue Lys569 participates in ATP binding.

It belongs to the class-I aminoacyl-tRNA synthetase family.

Its subcellular location is the cytoplasm. It catalyses the reaction tRNA(Leu) + L-leucine + ATP = L-leucyl-tRNA(Leu) + AMP + diphosphate. In Vairimorpha ceranae (strain BRL01) (Microsporidian parasite), this protein is Probable leucine--tRNA ligase, cytoplasmic.